A 285-amino-acid polypeptide reads, in one-letter code: MKVGYLGPAATFTHLAVSSCFQNGAEHVAYRTIPECIDAAVAGEVDFAFVPLENALEGSVNLTIDYLIHEQPLPIVGEMTLPIHQHLLVHPSRENAWKELDKIYSHSHAIAQCHKFLHRHFPSVPYEYANSTGAAAKFVSDHPELNIGVIANDMAASTYELKIVKRDIQDYRDNHTRFVILSPDENISFEVNSKLSSRPKTTLMVMLPQDDQSGALHRVLSAFSWRNLNLSKIESRPTKTGLGHYFFIIDIEKAFDDVLIPGAMQELEALGCKVRLLGAYQSYQL.

The Prephenate dehydratase domain maps to Lys2–Pro183. An ACT domain is found at Met204–Gln281.

It carries out the reaction prephenate + H(+) = 3-phenylpyruvate + CO2 + H2O. It functions in the pathway amino-acid biosynthesis; L-phenylalanine biosynthesis; phenylpyruvate from prephenate: step 1/1. The polypeptide is Prephenate dehydratase (pheA) (Bacillus subtilis (strain 168)).